The primary structure comprises 303 residues: MATH domain and coiled-coil domain-containing protein At3g58250 (303 aa).

In terms of domain architecture, MATH spans 8-135 (KKKFSWVIKN…KGELKIVVEI (128 aa)). A coiled-coil region spans residues 231 to 287 (KLDWLKKKLDQVTQKKEKEAAGETRMHEIGEELKDLKLKCSDLEAQLDKEKADVLAA).

The chain is MATH domain and coiled-coil domain-containing protein At3g58250 from Arabidopsis thaliana (Mouse-ear cress).